A 278-amino-acid chain; its full sequence is Checkpoint protein HUS1B (278 aa).

Belongs to the HUS1 family. As to quaternary structure, interacts with RAD1 and RAD9B. As to expression, expressed strongly in testis, less in spleen, thymus, prostate, colon and leukocytes.

In Homo sapiens (Human), this protein is Checkpoint protein HUS1B (HUS1B).